Here is a 68-residue protein sequence, read N- to C-terminus: Conotoxin Cal12.1p1 (68 aa).

A propeptide spanning residues 1–23 (DLITNSYTRGKPRHVTSWRNLRT) is cleaved from the precursor.

Post-translationally, contains 4 disulfide bonds. In terms of tissue distribution, expressed by the venom duct.

The protein resides in the secreted. This is Conotoxin Cal12.1p1 from Californiconus californicus (California cone).